A 634-amino-acid polypeptide reads, in one-letter code: Kelch-like protein 22 (634 aa).

Ala2 bears the N-acetylalanine mark. Residues 50 to 117 (FDVVLVVEGR…IYTSELELSL (68 aa)) enclose the BTB domain. Kelch repeat units follow at residues 299–349 (CVVG…VLNN), 350–399 (FVYL…VVGK), 400–446 (YIYA…TLQG), 448–493 (MYIT…ALLD), 494–544 (KLFV…VLDN), and 545–593 (RIYV…VLTL). The residue at position 463 (Thr463) is a Phosphothreonine. The residue at position 466 (Tyr466) is a Phosphotyrosine. Thr475 bears the Phosphothreonine mark. Residues 600 to 634 (EQPRGTPNRSQADADFASEVMSVSDWEEFDNSSED) are disordered. Thr605 carries the post-translational modification Phosphothreonine. Residues 624–634 (DWEEFDNSSED) show a composition bias toward acidic residues.

As to quaternary structure, component of the BCR(KLHL22) E3 ubiquitin ligase complex, at least composed of CUL3, KLHL22 and RBX1. Interacts with PLK1. Interacts with DEPDC5 (via DEP domain); the interaction depends on amino acid availability. Interacts with YWHAE; required for the nuclear localization of KLHL22 upon amino acid starvation.

Its subcellular location is the cytoplasm. It localises to the cytosol. The protein localises to the cytoskeleton. The protein resides in the microtubule organizing center. It is found in the centrosome. Its subcellular location is the spindle. It localises to the nucleus. The protein localises to the lysosome. It participates in protein modification; protein ubiquitination. Functionally, substrate-specific adapter of a BCR (BTB-CUL3-RBX1) E3 ubiquitin ligase complex required for chromosome alignment and localization of PLK1 at kinetochores. The BCR(KLHL22) ubiquitin ligase complex mediates monoubiquitination of PLK1, leading to PLK1 dissociation from phosphoreceptor proteins and subsequent removal from kinetochores, allowing silencing of the spindle assembly checkpoint (SAC) and chromosome segregation. Monoubiquitination of PLK1 does not lead to PLK1 degradation. The BCR(KLHL22) ubiquitin ligase complex is also responsible for the amino acid-stimulated 'Lys-48' polyubiquitination and proteasomal degradation of DEPDC5. Through the degradation of DEPDC5, releases the GATOR1 complex-mediated inhibition of the TORC1 pathway. It is therefore an amino acid-dependent activator within the amino acid-sensing branch of the TORC1 pathway, indirectly regulating different cellular processes including cell growth and autophagy. The chain is Kelch-like protein 22 from Rattus norvegicus (Rat).